Consider the following 155-residue polypeptide: S-ribosylhomocysteine lyase (155 aa).

Residues His58, His62, and Cys125 each contribute to the Fe cation site.

This sequence belongs to the LuxS family. As to quaternary structure, homodimer. The cofactor is Fe cation.

The catalysed reaction is S-(5-deoxy-D-ribos-5-yl)-L-homocysteine = (S)-4,5-dihydroxypentane-2,3-dione + L-homocysteine. Involved in the synthesis of autoinducer 2 (AI-2) which is secreted by bacteria and is used to communicate both the cell density and the metabolic potential of the environment. The regulation of gene expression in response to changes in cell density is called quorum sensing. Catalyzes the transformation of S-ribosylhomocysteine (RHC) to homocysteine (HC) and 4,5-dihydroxy-2,3-pentadione (DPD). The protein is S-ribosylhomocysteine lyase of Helicobacter pylori (strain Shi470).